Consider the following 454-residue polypeptide: F-box protein At1g67130 (454 aa).

In terms of domain architecture, F-box spans 4–53 (GETLDSIPTDLILDILSRLPTKSIARFHCVSKLWSSMLASQDFTRLFVNR).

The protein is F-box protein At1g67130 of Arabidopsis thaliana (Mouse-ear cress).